The primary structure comprises 126 residues: Large ribosomal subunit protein bL12 (126 aa).

It belongs to the bacterial ribosomal protein bL12 family. In terms of assembly, homodimer. Part of the ribosomal stalk of the 50S ribosomal subunit. Forms a multimeric L10(L12)X complex, where L10 forms an elongated spine to which 2 to 4 L12 dimers bind in a sequential fashion. Binds GTP-bound translation factors.

Functionally, forms part of the ribosomal stalk which helps the ribosome interact with GTP-bound translation factors. Is thus essential for accurate translation. In Desulfatibacillum aliphaticivorans, this protein is Large ribosomal subunit protein bL12.